The primary structure comprises 124 residues: Small ribosomal subunit protein uS12 (124 aa).

The disordered stretch occupies residues Met-1 to Pro-22. Asp-89 carries the post-translational modification 3-methylthioaspartic acid. Residues Arg-99 to Lys-124 are disordered. The span at Lys-111–Lys-124 shows a compositional bias: basic residues.

This sequence belongs to the universal ribosomal protein uS12 family. As to quaternary structure, part of the 30S ribosomal subunit. Contacts proteins S8 and S17. May interact with IF1 in the 30S initiation complex.

Functionally, with S4 and S5 plays an important role in translational accuracy. In terms of biological role, interacts with and stabilizes bases of the 16S rRNA that are involved in tRNA selection in the A site and with the mRNA backbone. Located at the interface of the 30S and 50S subunits, it traverses the body of the 30S subunit contacting proteins on the other side and probably holding the rRNA structure together. The combined cluster of proteins S8, S12 and S17 appears to hold together the shoulder and platform of the 30S subunit. This is Small ribosomal subunit protein uS12 from Marinomonas sp. (strain MWYL1).